The chain runs to 170 residues: Adenine phosphoribosyltransferase (170 aa).

Belongs to the purine/pyrimidine phosphoribosyltransferase family. In terms of assembly, homodimer.

The protein resides in the cytoplasm. The enzyme catalyses AMP + diphosphate = 5-phospho-alpha-D-ribose 1-diphosphate + adenine. It participates in purine metabolism; AMP biosynthesis via salvage pathway; AMP from adenine: step 1/1. Functionally, catalyzes a salvage reaction resulting in the formation of AMP, that is energically less costly than de novo synthesis. The chain is Adenine phosphoribosyltransferase from Bacillus mycoides (strain KBAB4) (Bacillus weihenstephanensis).